We begin with the raw amino-acid sequence, 150 residues long: Multiprotein-bridging factor 1 (150 aa).

Residues 36-71 (SSESKGAGQSKGPADHQRIAKLDRDDAPKPPEKVSA) form a disordered region. Over residues 48–70 (PADHQRIAKLDRDDAPKPPEKVS) the composition is skewed to basic and acidic residues. The 54-residue stretch at 84 to 137 (IKNAEGKSMTQKELATSVNAKPQDIADLESGRAVPDQALLGKLERKLNVKLRGA) folds into the HTH cro/C1-type domain. The segment at residues 94–113 (QKELATSVNAKPQDIADLES) is a DNA-binding region (H-T-H motif).

It belongs to the MBF1 family.

Transcriptional coactivator that stimulates GCN4-dependent transcriptional activity by bridging the DNA-binding region of GCN4 and TBP (SPT15), thereby recruiting TBP to GCN4-bound promoters. Involved in induction of the ribosome quality control (RQC) pathway; a pathway that degrades nascent peptide chains during problematic translation. Required to prevent stalled ribosomes from frameshifting. This chain is Multiprotein-bridging factor 1 (MBF1), found in Cryptococcus neoformans var. neoformans serotype D (strain B-3501A) (Filobasidiella neoformans).